A 154-amino-acid chain; its full sequence is Keratin-associated protein 9-9 (154 aa).

14 tandem repeats follow at residues 8–12 (CCQPT), 13–17 (CCRTT), 18–22 (CCRTT), 37–41 (CCQPS), 42–46 (CCVSS), 51–55 (CCRPA), 56–60 (CCQNT), 61–65 (CCRTT), 66–70 (CCQPT), 75–79 (CCGQT), 124–128 (CCRPA), 129–133 (CCETT), 134–137 (CCRT), and 148–152 (CCQPS). Residues 8–152 (CCQPTCCRTT…TCVSSCCQPS (145 aa)) form a 14 X 5 AA repeats of C-C-[RQVGE]-[SPSTNQ]-[TASL] region.

The protein belongs to the KRTAP type 9 family. As to quaternary structure, interacts with hair keratins.

In the hair cortex, hair keratin intermediate filaments are embedded in an interfilamentous matrix, consisting of hair keratin-associated proteins (KRTAP), which are essential for the formation of a rigid and resistant hair shaft through their extensive disulfide bond cross-linking with abundant cysteine residues of hair keratins. The matrix proteins include the high-sulfur and high-glycine-tyrosine keratins. This chain is Keratin-associated protein 9-9 (KRTAP9-9), found in Homo sapiens (Human).